The following is a 357-amino-acid chain: DNA integrity scanning protein DisA (357 aa).

The DAC domain maps to 8-146 (VKSMINILQL…GNLRYTLKDI (139 aa)). Residues G75, L93, and 106 to 110 (MRHRT) contribute to the ATP site.

This sequence belongs to the DisA family. Homooctamer. It depends on Mg(2+) as a cofactor.

It catalyses the reaction 2 ATP = 3',3'-c-di-AMP + 2 diphosphate. Functionally, participates in a DNA-damage check-point that is active prior to asymmetric division when DNA is damaged. DisA forms globular foci that rapidly scan along the chromosomes during sporulation, searching for lesions. When a lesion is present, DisA pauses at the lesion site. This triggers a cellular response that culminates in a temporary block in sporulation initiation. Its function is as follows. Also has diadenylate cyclase activity, catalyzing the condensation of 2 ATP molecules into cyclic di-AMP (c-di-AMP). c-di-AMP acts as a signaling molecule that couples DNA integrity with progression of sporulation. The rise in c-di-AMP level generated by DisA while scanning the chromosome, operates as a positive signal that advances sporulation; upon encountering a lesion, the DisA focus arrests at the damaged site and halts c-di-AMP synthesis. This chain is DNA integrity scanning protein DisA, found in Bacillus cereus (strain G9842).